The chain runs to 284 residues: RCS-specific HTH-type transcriptional activator RclR (284 aa).

Cysteine 21 and cysteine 89 are oxidised to a cystine. Positions 177–278 constitute an HTH araC/xylS-type domain; it reads PRLGAVIQQM…GCTPGEYRER (102 aa). 2 DNA-binding regions (H-T-H motif) span residues 197–218 and 245–268; these read ESLA…RDVS and VVVI…VREF.

Its activity is regulated as follows. Oxydation of Cys-21 leads to partial activation of RclR, followed by the formation of an intramolecular disulfide bond between Cys-21 and Cys-89, which stabilizes the active form of RclR. Its function is as follows. Involved in reactive chlorine species (RCS) stress resistance. Up-regulates, in response to hypochlorous acid (HOCl), the expression of three genes essential for survival of RCS stress (rclA, rclB and rclC) and its own expression. In Escherichia coli (strain K12), this protein is RCS-specific HTH-type transcriptional activator RclR (rclR).